Here is a 421-residue protein sequence, read N- to C-terminus: Acylglycerol kinase, mitochondrial (421 aa).

An N6-acetyllysine modification is found at Lys-6. Residues 15–31 (TTAGLCLLTWGGHWLYG) form a hydrophobic region. A DAGKc domain is found at 58-199 (AQVKKATVFL…LDVLQIKGEK (142 aa)). Residues 252–271 (ISYTGPRERPPIEPEETPPR) are disordered.

The protein belongs to the AGK family. As to quaternary structure, component of the TIM22 complex, which core is composed of TIMM22, associated with TIMM10 (TIMM10A and/or TIMM10B), TIMM9, AGK and TIMM29. Interacts with SMIM26. Mg(2+) is required as a cofactor. As to expression, ubiquitously expressed.

The protein localises to the mitochondrion inner membrane. The protein resides in the mitochondrion intermembrane space. The catalysed reaction is a monoacylglycerol + ATP = a monoacyl-sn-glycero-3-phosphate + ADP + H(+). It catalyses the reaction a 1,2-diacyl-sn-glycerol + ATP = a 1,2-diacyl-sn-glycero-3-phosphate + ADP + H(+). The enzyme catalyses an N-acylsphing-4-enine + ATP = an N-acylsphing-4-enine 1-phosphate + ADP + H(+). It carries out the reaction 1,2-di-(9Z-octadecenoyl)-sn-glycerol + ATP = 1,2-di-(9Z-octadecenoyl)-sn-glycero-3-phosphate + ADP + H(+). The catalysed reaction is 1-(9Z-octadecenoyl)-sn-glycerol + ATP = 1-(9Z-octadecenoyl)-sn-glycero-3-phosphate + ADP + H(+). It catalyses the reaction 1-(5Z,8Z,11Z,14Z-eicosatetraenoyl)-sn-glycerol + ATP = 1-(5Z,8Z,11Z,14Z-eicosatetraenoyl)-sn-glycero-3-phosphate + ADP + H(+). The enzyme catalyses a 1-acyl-sn-glycerol + ATP = a 1-acyl-sn-glycero-3-phosphate + ADP + H(+). It carries out the reaction 1-hexadecanoyl-sn-glycerol + ATP = 1-hexadecanoyl-sn-glycero-3-phosphate + ADP + H(+). The catalysed reaction is a 2-acylglycerol + ATP = a 2-acyl-sn-glycerol 3-phosphate + ADP + H(+). It catalyses the reaction 2-(5Z,8Z,11Z,14Z-eicosatetraenoyl)-glycerol + ATP = 2-(5Z,8Z,11Z,14Z-eicosatetraenoyl)-sn-glycero-3-phosphate + ADP + H(+). The enzyme catalyses N-(hexanoyl)sphing-4-enine + ATP = N-hexanoylsphing-4-enine 1-phosphate + ADP + H(+). It participates in lipid metabolism; glycerolipid metabolism. With respect to regulation, both the ceramide and diacylglycerol kinase activities are inhibited by sphingosine and stimulated by cardiolipin. Both activities are stimulated by calcium when magnesium concentrations are low but inhibited by calcium when magnesium concentrations are high. In terms of biological role, lipid kinase that can phosphorylate both monoacylglycerol and diacylglycerol to form lysophosphatidic acid (LPA) and phosphatidic acid (PA), respectively. Phosphorylates ceramide but not sphingosine. Phosphorylates 1,2-dioleoylglycerol more rapidly than 2,3-dioleoylglycerol. Independently of its lipid kinase activity, acts as a component of the TIM22 complex. The TIM22 complex mediates the import and insertion of multi-pass transmembrane proteins into the mitochondrial inner membrane by forming a twin-pore translocase that uses the membrane potential as the external driving force. In the TIM22 complex, required for the import of a subset of metabolite carriers into mitochondria, such as ANT1/SLC25A4 and SLC25A24, while it is not required for the import of TIMM23. Overexpression increases the formation and secretion of LPA, resulting in transactivation of EGFR and activation of the downstream MAPK signaling pathway, leading to increased cell growth. The sequence is that of Acylglycerol kinase, mitochondrial from Mus musculus (Mouse).